A 273-amino-acid polypeptide reads, in one-letter code: Anthranilate synthase beta subunit 2, chloroplastic (273 aa).

A chloroplast-targeting transit peptide spans 1–47; sequence MATAARLLPKIQSPASPAVAEARRRRPSSLRLGVTSGPARTLKQKLV. Residues 15–35 form a disordered region; sequence ASPAVAEARRRRPSSLRLGVT. In terms of domain architecture, Glutamine amidotransferase type-1 spans 70–269; sequence PIIVIDNYDS…IKIIEGYEAL (200 aa). 121–123 contributes to the L-glutamine binding site; that stretch reads GPG. Cysteine 148 (nucleophile) is an active-site residue. Residues glutamine 152 and 202–203 contribute to the L-glutamine site; that span reads SL. Residues histidine 243 and glutamate 245 contribute to the active site.

Heterotetramer consisting of two non-identical subunits: a beta subunit and a large alpha subunit. In terms of tissue distribution, expressed in roots and leaves.

The protein localises to the plastid. It localises to the chloroplast. The enzyme catalyses chorismate + L-glutamine = anthranilate + pyruvate + L-glutamate + H(+). It functions in the pathway amino-acid biosynthesis; L-tryptophan biosynthesis; L-tryptophan from chorismate: step 1/5. In terms of biological role, part of a heterotetrameric complex that catalyzes the two-step biosynthesis of anthranilate, an intermediate in the biosynthesis of L-tryptophan. In the first step, the glutamine-binding beta subunit of anthranilate synthase (AS) provides the glutamine amidotransferase activity which generates ammonia as a substrate that, along with chorismate, is used in the second step, catalyzed by the large alpha subunit of AS to produce anthranilate. The sequence is that of Anthranilate synthase beta subunit 2, chloroplastic from Oryza sativa subsp. japonica (Rice).